The following is a 312-amino-acid chain: Ribosomal RNA small subunit methyltransferase H (312 aa).

S-adenosyl-L-methionine contacts are provided by residues 35–37 (GGH), Asp55, Phe79, Asp101, and Gln108.

It belongs to the methyltransferase superfamily. RsmH family.

It is found in the cytoplasm. It carries out the reaction cytidine(1402) in 16S rRNA + S-adenosyl-L-methionine = N(4)-methylcytidine(1402) in 16S rRNA + S-adenosyl-L-homocysteine + H(+). Functionally, specifically methylates the N4 position of cytidine in position 1402 (C1402) of 16S rRNA. This is Ribosomal RNA small subunit methyltransferase H from Buchnera aphidicola subsp. Acyrthosiphon pisum (strain APS) (Acyrthosiphon pisum symbiotic bacterium).